A 209-amino-acid chain; its full sequence is Small ribosomal subunit protein uS4 (209 aa).

Zn(2+) is bound by residues Cys9, Cys12, Cys26, and Cys31. Residues 9 to 31 (CRLCRREGVKLYLKGERCYSPKC) form a C4-type zinc finger. In terms of domain architecture, S4 RNA-binding spans 100–162 (RLDNVVYRLG…RNLELIRQNL (63 aa)).

The protein belongs to the universal ribosomal protein uS4 family. As to quaternary structure, part of the 30S ribosomal subunit. Contacts protein S5. The interaction surface between S4 and S5 is involved in control of translational fidelity. Zn(2+) is required as a cofactor.

Functionally, one of the primary rRNA binding proteins, it binds directly to 16S rRNA where it helps nucleate assembly of the body and platform of the 30S subunit. The chain is Small ribosomal subunit protein uS4 (rpsD) from Thermus thermophilus (strain ATCC BAA-163 / DSM 7039 / HB27).